Reading from the N-terminus, the 580-residue chain is Glyco-Gag protein (580 aa).

The Cytoplasmic segment spans residues 1 to 51; the sequence is MSGASSGTAIGAHLFGVSPEYRVLIGDGGAGPSKSLSEVSFSVWYRSRAAR. Residues 52–72 form a helical membrane-spanning segment; the sequence is LVILCLVASFLVPCLTFLIAE. Topologically, residues 73–580 are extracellular; sequence AVMGQTVTTP…ANSTLLNLED (508 aa). N134 carries N-linked (GlcNAc...) asparagine; by host glycosylation. Disordered stretches follow at residues 171–282, 491–514, and 560–580; these read VRPF…NRPQ, ETPE…RHKE, and RDCP…NLED. Positions 174 to 193 are enriched in pro residues; sequence FLPPPKPPTPLPQPLSPQPS. Low complexity predominate over residues 194-203; that stretch reads APLTSSLYPV. Composition is skewed to pro residues over residues 204 to 220 and 230 to 245; these read VPKP…PDPS and EPPP…PSGP. The segment covering 491-508 has biased composition (basic and acidic residues); the sequence is ETPEEREERLWQRQEERD. Polar residues predominate over residues 571–580; sequence ANSTLLNLED. N572 is a glycosylation site (N-linked (GlcNAc...) asparagine; by host).

Post-translationally, glycosylated by host. Cleaved by host near the middle of the molecule, releasing the c-terminal half containing capsid and nucleoprotein domains op GAG.

The protein resides in the host cell membrane. Plays a role in viral particle release. Presumably acts by facilitating the fission of the virion bud at the cell surface. The polypeptide is Glyco-Gag protein (Feline leukemia virus).